Consider the following 420-residue polypeptide: Histidine--tRNA ligase (420 aa).

This sequence belongs to the class-II aminoacyl-tRNA synthetase family. In terms of assembly, homodimer.

The protein localises to the cytoplasm. It catalyses the reaction tRNA(His) + L-histidine + ATP = L-histidyl-tRNA(His) + AMP + diphosphate + H(+). This chain is Histidine--tRNA ligase, found in Staphylococcus saprophyticus subsp. saprophyticus (strain ATCC 15305 / DSM 20229 / NCIMB 8711 / NCTC 7292 / S-41).